Reading from the N-terminus, the 1401-residue chain is DNA-directed RNA polymerase subunit beta' (1401 aa).

Residues Cys71, Cys73, Cys86, and Cys89 each coordinate Zn(2+). The Mg(2+) site is built by Asp462, Asp464, and Asp466. Residues Cys810, Cys884, Cys891, and Cys894 each contribute to the Zn(2+) site. Positions 1377–1401 (RRKGTGAESATPMLADMANDPAAAE) are disordered.

It belongs to the RNA polymerase beta' chain family. In terms of assembly, the RNAP catalytic core consists of 2 alpha, 1 beta, 1 beta' and 1 omega subunit. When a sigma factor is associated with the core the holoenzyme is formed, which can initiate transcription. Requires Mg(2+) as cofactor. It depends on Zn(2+) as a cofactor.

The catalysed reaction is RNA(n) + a ribonucleoside 5'-triphosphate = RNA(n+1) + diphosphate. Functionally, DNA-dependent RNA polymerase catalyzes the transcription of DNA into RNA using the four ribonucleoside triphosphates as substrates. This chain is DNA-directed RNA polymerase subunit beta', found in Rhizobium meliloti (strain 1021) (Ensifer meliloti).